We begin with the raw amino-acid sequence, 67 residues long: DNA-directed RNA polymerase subunit omega (67 aa).

It belongs to the RNA polymerase subunit omega family. In terms of assembly, the RNAP catalytic core consists of 2 alpha, 1 beta, 1 beta' and 1 omega subunit. When a sigma factor is associated with the core the holoenzyme is formed, which can initiate transcription.

The catalysed reaction is RNA(n) + a ribonucleoside 5'-triphosphate = RNA(n+1) + diphosphate. Functionally, promotes RNA polymerase assembly. Latches the N- and C-terminal regions of the beta' subunit thereby facilitating its interaction with the beta and alpha subunits. This is DNA-directed RNA polymerase subunit omega from Burkholderia ambifaria (strain MC40-6).